The following is a 167-amino-acid chain: MLVIHQRLPARSPRWDEELHLTYEARSKSRLRCFAASGEEVGLFLERGLPPLADGDCLEARDGRVVRVFARAEELLHVTCASPLELTRAAYHLGNRHVALQVGEGWLRLLDDYVLKAMLEQLGASVNAIQAPFQPEHGAYGGGHHHSHHGEAEFNYAPRLHQFGVRR.

This sequence belongs to the UreE family.

The protein resides in the cytoplasm. In terms of biological role, involved in urease metallocenter assembly. Binds nickel. Probably functions as a nickel donor during metallocenter assembly. In Pseudomonas paraeruginosa (strain DSM 24068 / PA7) (Pseudomonas aeruginosa (strain PA7)), this protein is Urease accessory protein UreE.